Here is a 24-residue protein sequence, read N- to C-terminus: Glutamate dehydrogenase (24 aa).

It belongs to the Glu/Leu/Phe/Val dehydrogenases family. In terms of assembly, homohexamer.

The protein resides in the cytoplasm. The catalysed reaction is L-glutamate + NAD(+) + H2O = 2-oxoglutarate + NH4(+) + NADH + H(+). It carries out the reaction L-glutamate + NADP(+) + H2O = 2-oxoglutarate + NH4(+) + NADPH + H(+). The polypeptide is Glutamate dehydrogenase (gdhA) (Pyrococcus woesei).